Consider the following 89-residue polypeptide: Putative ankyrin repeat protein RF_1157 (89 aa).

Residues 2–32 (YNTTPLNFAINQENNEEVIKYLLANGANPRL) form an ANK repeat.

The polypeptide is Putative ankyrin repeat protein RF_1157 (Rickettsia felis (strain ATCC VR-1525 / URRWXCal2) (Rickettsia azadi)).